The chain runs to 189 residues: MVKMIVGLGNPGSKHQQTKHNVGFMAVDRLVKDLDVSFTEDKTFKALIGSTFINQEKIYFVKPTTFMNNSGLAVRALLTYYNISTKDLMVIYDDLDMAVGKIRLRQKGSAGGHNGIKSIIAHIGTQEFDRVKIGIGRPSHGMSVINHVLGKFDTDDMITINIALDKVDKAINYYLQEKSIEKTMQQFNG.

Histidine 15 is a binding site for tRNA. Histidine 20 functions as the Proton acceptor in the catalytic mechanism. Positions 66, 68, and 114 each coordinate tRNA.

The protein belongs to the PTH family. As to quaternary structure, monomer.

It is found in the cytoplasm. It carries out the reaction an N-acyl-L-alpha-aminoacyl-tRNA + H2O = an N-acyl-L-amino acid + a tRNA + H(+). Its function is as follows. Hydrolyzes ribosome-free peptidyl-tRNAs (with 1 or more amino acids incorporated), which drop off the ribosome during protein synthesis, or as a result of ribosome stalling. Catalyzes the release of premature peptidyl moieties from peptidyl-tRNA molecules trapped in stalled 50S ribosomal subunits, and thus maintains levels of free tRNAs and 50S ribosomes. The polypeptide is Peptidyl-tRNA hydrolase (Streptococcus equi subsp. equi (strain 4047)).